An 86-amino-acid chain; its full sequence is Translation machinery-associated protein 10 (86 aa).

Phosphoserine occurs at positions 28 and 79. The segment at 63–86 is disordered; that stretch reads NKTRRGSNSQNNERRLSDLQQYHI.

This sequence belongs to the STF2 family. Associates with ribosomes.

It is found in the cytoplasm. The protein localises to the nucleus. Its function is as follows. May be involved in inhibition of the reverse ATPase reaction of mitochondrial F(1)F(0)-type ATP synthase. The chain is Translation machinery-associated protein 10 from Saccharomyces cerevisiae (strain ATCC 204508 / S288c) (Baker's yeast).